A 432-amino-acid chain; its full sequence is MEKFYDEIVSVKAREVLDSRGNPTVEAEVTLSTGVTGSAIVPSGASTGKFEALELRDGNKDYYMGKGVTKAVNNVNNIIEQEVVGLNAFDQVNVDRVMLDLDGTENKENLGANAILAVSMAAARAAANSLGLPLYKYLGGVNAKVLPVPMMNIINGGQHADNNLDIQEFMIMPAGFNSFKDALRAGAEVFHNLKNILKKEGHITSVGDEGGFAPNLNSNEEAIKYIIRAIQAAGYEPGKQIFIAMDAAASEFYNEETKKYSVDGKEMSAAELAEYYISLIDKYPIKSLEDPFDQDDWEGYSEFTAKVGDRVQIVGDDLYVTNVKRLQKGIDLKATNSILIKLNQIGSVTETLDAIELAYKNNMTAVVSHRSGETEDSFIADLVVAVNAGFIKTGSLSRTDRIAKYNQLLRIEDELGSTAQYRGLNAFYSIKK.

Position 167 (Q167) interacts with (2R)-2-phosphoglycerate. The Proton donor role is filled by E209. The Mg(2+) site is built by D246, E289, and D316. (2R)-2-phosphoglycerate contacts are provided by K341, R370, S371, and K392. The Proton acceptor role is filled by K341.

It belongs to the enolase family. It depends on Mg(2+) as a cofactor.

The protein resides in the cytoplasm. Its subcellular location is the secreted. It localises to the cell surface. It carries out the reaction (2R)-2-phosphoglycerate = phosphoenolpyruvate + H2O. Its pathway is carbohydrate degradation; glycolysis; pyruvate from D-glyceraldehyde 3-phosphate: step 4/5. Functionally, catalyzes the reversible conversion of 2-phosphoglycerate (2-PG) into phosphoenolpyruvate (PEP). It is essential for the degradation of carbohydrates via glycolysis. The polypeptide is Enolase (Petrotoga mobilis (strain DSM 10674 / SJ95)).